We begin with the raw amino-acid sequence, 153 residues long: Catabolic 3-dehydroquinase (153 aa).

Catalysis depends on tyrosine 24, which acts as the Proton acceptor. Substrate contacts are provided by asparagine 75, histidine 81, and aspartate 88. Histidine 101 (proton donor) is an active-site residue. Residues 102 to 103 (VS) and arginine 112 each bind substrate.

Belongs to the type-II 3-dehydroquinase family. As to quaternary structure, homododecamer. Adopts a ring-like structure, composed of an arrangement of two hexameric rings stacked on top of one another.

The catalysed reaction is 3-dehydroquinate = 3-dehydroshikimate + H2O. It participates in aromatic compound metabolism; 3,4-dihydroxybenzoate biosynthesis; 3,4-dihydroxybenzoate from 3-dehydroquinate: step 1/2. In terms of biological role, is involved in the catabolism of quinate. Allows the utilization of quinate as carbon source via the beta-ketoadipate pathway. This chain is Catabolic 3-dehydroquinase, found in Aspergillus oryzae (strain ATCC 42149 / RIB 40) (Yellow koji mold).